A 295-amino-acid polypeptide reads, in one-letter code: Protein LplC (295 aa).

The next 6 membrane-spanning stretches (helical) occupy residues 21-41 (ILFL…IIAG), 81-101 (VSIF…FTMA), 116-136 (LNLV…YLVV), 142-162 (LDTY…LIII), 199-219 (VIAT…FHAL), and 260-280 (GIKL…YPFL). The region spanning 79 to 280 (MGVSIFITVV…LPILAVYPFL (202 aa)) is the ABC transmembrane type-1 domain.

Belongs to the binding-protein-dependent transport system permease family. CysTW subfamily.

It localises to the cell membrane. This Bacillus subtilis (strain 168) protein is Protein LplC (lplC).